Reading from the N-terminus, the 109-residue chain is Thioredoxin (109 aa).

A Thioredoxin domain is found at 2-109 (ETLLWKDARE…LVEKIKELFK (108 aa)). Residues cysteine 27 and cysteine 30 are joined by a disulfide bond.

This sequence belongs to the thioredoxin family.

Participates in various redox reactions through the reversible oxidation of its active center dithiol to a disulfide and catalyzes dithiol-disulfide exchange reactions. This is Thioredoxin (trxA) from Mycoplasmopsis pulmonis (strain UAB CTIP) (Mycoplasma pulmonis).